The sequence spans 696 residues: Ribonucleoside-diphosphate reductase subunit beta (696 aa).

Positions 97, 127, and 130 each coordinate Fe cation. Tyr134 is an active-site residue. Residues Glu194 and Glu228 each contribute to the Fe cation site. The 131-residue stretch at 377–507 folds into the DOD-type homing endonuclease domain; it reads DGTIDSKRNG…FVQALCALGG (131 aa). His577 provides a ligand contact to Fe cation.

It belongs to the ribonucleoside diphosphate reductase small chain family. Tetramer of two alpha and two beta subunits. Fe cation is required as a cofactor. Post-translationally, this protein undergoes a protein self splicing that involves a post-translational excision of the intervening region (intein) followed by peptide ligation.

It carries out the reaction a 2'-deoxyribonucleoside 5'-diphosphate + [thioredoxin]-disulfide + H2O = a ribonucleoside 5'-diphosphate + [thioredoxin]-dithiol. Functionally, provides the precursors necessary for DNA synthesis. Catalyzes the biosynthesis of deoxyribonucleotides from the corresponding ribonucleotides. The polypeptide is Ribonucleoside-diphosphate reductase subunit beta (nrdB) (Aquifex aeolicus (strain VF5)).